The following is a 321-amino-acid chain: GDP-L-fucose synthase (321 aa).

Residues 10–16 (GHRGMVG), 36–41 (RDELNL), and 105–108 (LGSS) each bind NADP(+). Residue tyrosine 136 is the Proton donor/acceptor of the active site. NADP(+)-binding positions include lysine 140, 163-166 (PTNL), and histidine 179. The substrate site is built by arginine 187, tryptophan 202, arginine 209, and aspartate 278.

The protein belongs to the NAD(P)-dependent epimerase/dehydratase family. Fucose synthase subfamily. In terms of assembly, homodimer.

The protein resides in the cytoplasm. The catalysed reaction is GDP-beta-L-fucose + NADP(+) = GDP-4-dehydro-alpha-D-rhamnose + NADPH + H(+). The protein operates within nucleotide-sugar biosynthesis; GDP-L-fucose biosynthesis via de novo pathway; GDP-L-fucose from GDP-alpha-D-mannose: step 2/2. Its pathway is exopolysaccharide biosynthesis; colanic acid biosynthesis. Its activity is regulated as follows. Subject to product inhibition by NADP and GDP-fucose. Functionally, catalyzes the two-step NADP-dependent conversion of GDP-4-dehydro-6-deoxy-D-mannose to GDP-fucose, involving an epimerase and a reductase reaction. The polypeptide is GDP-L-fucose synthase (Escherichia coli (strain K12)).